The chain runs to 499 residues: MIANLVSMETDLAMNIGLDTSGEAPTALPPMPNVTETLWDLAMVVSQSTQWPLLDTGSSENFSELVTTETPYVPYGRRPETYIVPILFALIFVVGVLGNGTLIVVFLSVRQMRNVPNTYILSLALADLLVIITTVPLASTVYTVEYWPYGSFLCSLSEFMKDVSIGVSVFTLTALSGDRYFAIVDPLRKFHAHGGGRRATRMTLATAVSIWLLAILCGLPALIGSNLKHLGINEKSIVICYPYPEEWGINYAKSMVLLHFLVYYAIPLVVIAVFYVLIALHLMYSASVPGEIQGAVRQVRARRKVAVTVLAFVVIFGICFLPYHVFFLWFYFWPTAQDDYNAFWHVLRIVAYCMSFANSCANPVALYFVSGAFRKHFNRYLFCRGASGRRKKRGQHDTFCMHRDTSLTSTASKRFQSRHSCYQSTIRSCRLQETTITTLPNGGNQNGANISAVELALPVLQAPGHNEAHAPPSYGFLPLNEIVQQTRSSPAKFQESLLN.

The Extracellular segment spans residues 1–85 (MIANLVSMET…GRRPETYIVP (85 aa)). 2 N-linked (GlcNAc...) asparagine glycosylation sites follow: Asn-33 and Asn-61. The helical transmembrane segment at 86-106 (ILFALIFVVGVLGNGTLIVVF) threads the bilayer. The Cytoplasmic segment spans residues 107–117 (LSVRQMRNVPN). A helical membrane pass occupies residues 118–138 (TYILSLALADLLVIITTVPLA). Residues 139–162 (STVYTVEYWPYGSFLCSLSEFMKD) lie on the Extracellular side of the membrane. Cysteines 154 and 240 form a disulfide. Residues 163–183 (VSIGVSVFTLTALSGDRYFAI) traverse the membrane as a helical segment. The Cytoplasmic portion of the chain corresponds to 184–203 (VDPLRKFHAHGGGRRATRMT). Residues 204-224 (LATAVSIWLLAILCGLPALIG) traverse the membrane as a helical segment. Residues 225 to 259 (SNLKHLGINEKSIVICYPYPEEWGINYAKSMVLLH) lie on the Extracellular side of the membrane. Residues 260-280 (FLVYYAIPLVVIAVFYVLIAL) form a helical membrane-spanning segment. The Cytoplasmic portion of the chain corresponds to 281-309 (HLMYSASVPGEIQGAVRQVRARRKVAVTV). A helical transmembrane segment spans residues 310 to 330 (LAFVVIFGICFLPYHVFFLWF). Over 331 to 348 (YFWPTAQDDYNAFWHVLR) the chain is Extracellular. The chain crosses the membrane as a helical span at residues 349-369 (IVAYCMSFANSCANPVALYFV). The Cytoplasmic segment spans residues 370–499 (SGAFRKHFNR…PAKFQESLLN (130 aa)).

This sequence belongs to the G-protein coupled receptor 1 family. Low levels in larval brain and gut with higher levels in adult brain and gut. In the brain expression is widely distributed, including strong expression in the mushroom bodies. Expressed weakly in s-LNv (small ventral lateral neurons) and strongly in l-LNv (large ventral lateral neurons), but not in other clock neurons.

It localises to the cell membrane. Its function is as follows. Receptor for the neuropeptide CCHamide-1. Plays a role in the modulation of starvation-induced olfactory behavior where starved flies show increased responsiveness to food odorants, repellants and pheromones. Contributes to regulation of sleep latency (the time required to fall asleep), amount of sleep and depth of sleep (arousability). Involved in modulation of PDP1 and PDF levels in s-LNv (small ventral lateral neurons) clock neurons in response to CCHa1 released by DN1a (anterior dorsal neurons 1) clock neurons, to regulate morning activity. In a subset of dopaminergic cells in the protocerebral anterior medial (PAM) cluster involved in suppressing arousability in response to CCHa1 secreted by gut enteroendocrine cells. The protein is Neuropeptide CCHamide-1 receptor of Drosophila melanogaster (Fruit fly).